The primary structure comprises 484 residues: Transcription factor TGAL4 (484 aa).

Polar residues predominate over residues 1 to 11; it reads MGEASSSSGHP. Disordered regions lie at residues 1 to 22, 84 to 137, and 155 to 181; these read MGEA…GYGF, ATAA…NASS, and QQEQ…DPKT. Positions 123–137 are enriched in low complexity; sequence SESSSKNNSNQNASS. Residues 163-173 are compositionally biased toward polar residues; the sequence is ATNSPTHSSKT. A bZIP domain is found at 178 to 222; sequence DPKTMRRLAQNREAARKSRLRKKAYIQQLESSKLKLAQMEQDIHR. The interval 180 to 200 is basic motif; the sequence is KTMRRLAQNREAARKSRLRKK. Residues 206–220 are leucine-zipper; the sequence is LESSKLKLAQMEQDI. The region spanning 241–455 is the DOG1 domain; that stretch reads AAMFDVDYAR…RALSSLWASR (215 aa).

Belongs to the bZIP family. As to quaternary structure, interacts with NPR1/NH1 and NPR3/NH3.

It is found in the nucleus. Functionally, transcriptional regulator involved in defense response. This is Transcription factor TGAL4 from Oryza sativa subsp. japonica (Rice).